The following is a 39-amino-acid chain: Cytochrome b559 subunit beta (39 aa).

The chain crosses the membrane as a helical span at residues 14–30 (WLAVHGLAVPTVFFLGS). Residue histidine 18 coordinates heme.

Belongs to the PsbE/PsbF family. In terms of assembly, heterodimer of an alpha subunit and a beta subunit. PSII is composed of 1 copy each of membrane proteins PsbA, PsbB, PsbC, PsbD, PsbE, PsbF, PsbH, PsbI, PsbJ, PsbK, PsbL, PsbM, PsbT, PsbX, PsbY, PsbZ, Psb30/Ycf12, at least 3 peripheral proteins of the oxygen-evolving complex and a large number of cofactors. It forms dimeric complexes. Requires heme b as cofactor.

It is found in the plastid. The protein localises to the chloroplast thylakoid membrane. Functionally, this b-type cytochrome is tightly associated with the reaction center of photosystem II (PSII). PSII is a light-driven water:plastoquinone oxidoreductase that uses light energy to abstract electrons from H(2)O, generating O(2) and a proton gradient subsequently used for ATP formation. It consists of a core antenna complex that captures photons, and an electron transfer chain that converts photonic excitation into a charge separation. The protein is Cytochrome b559 subunit beta of Nicotiana glutinosa (Tobacco).